A 474-amino-acid chain; its full sequence is MTTNSTYQPVHVIGGGLAGSEAAWQIAQSGVPVILHEMRKDDATGKVITDAHQTDGLAEMVCSNSFRSDDWQFNAVGLLHAEMRKLGSLIMSCADQHQVPAGGALAVDRDGFSTEVTKRLSQHPLVTIVREEIAGLPPAPDGKNGWDNVIVATGPLTSPALAQAVLDLTGEGQLSFFDAIAPIIHFESINMDIAWRQSRYDKEGPGGDAAAYINCPMNKEQYEAFIDALLAGPKSEFKEWENVPYFDGCLPIEVMAERGRETLRHGPMKPVGLTNPRDPLVKAYAIVQLRQDNALGTLWNMVGFQTKLKHGVQAETFRMIPGLEDAQFARLGGLHRNTFINSPKLLDKSLRMKAQPRLRFAGQVTGVEGYVESAAMGLLTGRFAAADRKGAPIDAPPPTTALGALVEHITGGHLEAGNGPGSFQPMNINYGLLPPLEAPKVDEDGKKIPLKERGRAKKRLMSLRALKDLDAWMA.

14–19 (GGGLAG) contacts FAD.

Belongs to the MnmG family. TrmFO subfamily. It depends on FAD as a cofactor.

Its subcellular location is the cytoplasm. It catalyses the reaction uridine(54) in tRNA + (6R)-5,10-methylene-5,6,7,8-tetrahydrofolate + NADH + H(+) = 5-methyluridine(54) in tRNA + (6S)-5,6,7,8-tetrahydrofolate + NAD(+). The catalysed reaction is uridine(54) in tRNA + (6R)-5,10-methylene-5,6,7,8-tetrahydrofolate + NADPH + H(+) = 5-methyluridine(54) in tRNA + (6S)-5,6,7,8-tetrahydrofolate + NADP(+). Functionally, catalyzes the folate-dependent formation of 5-methyl-uridine at position 54 (M-5-U54) in all tRNAs. This chain is Methylenetetrahydrofolate--tRNA-(uracil-5-)-methyltransferase TrmFO, found in Caulobacter vibrioides (strain ATCC 19089 / CIP 103742 / CB 15) (Caulobacter crescentus).